Consider the following 1044-residue polypeptide: GRB10-interacting GYF protein 1 (1044 aa).

Phosphoserine is present on residues serine 24, serine 28, serine 137, and serine 157. Disordered regions lie at residues 104–290 (GKGA…DGLP) and 306–424 (ASGA…LEDE). Composition is skewed to basic and acidic residues over residues 148-179 (NPREIQRSQSWDDRGERRFEKPARRDGVRSGF) and 186-203 (PRKEHARSDSENWRSLRE). The residue at position 228 (serine 228) is a Phosphoserine. 2 stretches are compositionally biased toward basic and acidic residues: residues 237–265 (GWREHGERRRKFDFDLRGERGGCGEEDGR) and 316–332 (GPKEAIPEEQELDFRGL). Positions 333–350 (EEEEEEEEEPSEGVDEER) are enriched in acidic residues. Serine 343 bears the Phosphoserine mark. Low complexity predominate over residues 366 to 379 (NSSSPSSLPALGPL). Over residues 389-403 (AVEKELPPAEGDELR) the composition is skewed to basic and acidic residues. At serine 408 the chain carries Phosphoserine. Residues 476 to 524 (ARKWFYKDPQGEIQGPFTTQEMAEWFQAGYFSMSLLVKRGCDEGFQPLG) form the GYF domain. 2 positions are modified to phosphoserine: serine 540 and serine 634. A compositionally biased stretch (basic and acidic residues) spans 692-706 (KREEEERKRREEKRR). Disordered regions lie at residues 692 to 721 (KREEEERKRREEKRRQQQQQQEEQKRRQEE), 820 to 842 (EAGPLWGGPDKSGGSSGGNLGLW), 855 to 883 (SLGLKSSRSSPSLSDSYSHLSGRPVRKKT), 966 to 987 (QKASQQRQQQQQQQQQQQQEAW), 1000 to 1019 (NHSTKLGPGEGSKAKRRALM), and 1024 to 1044 (PSILGYSLHGPSGEIESVDDY). Residues 829 to 839 (DKSGGSSGGNL) are compositionally biased toward gly residues. Low complexity-rich tracts occupy residues 855–877 (SLGLKSSRSSPSLSDSYSHLSGR) and 970–984 (QQRQQQQQQQQQQQQ). Position 863 is a phosphoserine (serine 863).

Belongs to the GIGYF family. Interacts with GRB10. This transient binding is increased under IGF1 stimulation and leads to recruitment of GIGYF1/GRB10 complex to IGF1 receptor. Interacts with DDX6. In terms of tissue distribution, ubiquitous. Lower expression in skeletal muscle, liver and testis.

In terms of biological role, may act cooperatively with GRB10 to regulate tyrosine kinase receptor signaling. May increase IGF1 receptor phosphorylation under IGF1 stimulation as well as phosphorylation of IRS1 and SHC1. This chain is GRB10-interacting GYF protein 1 (Gigyf1), found in Mus musculus (Mouse).